Consider the following 181-residue polypeptide: MMLQHPGQVSASEVSASAFVPCLSPPGSLVFEDFANLTPFVKEELRLAIQSKHLCHRMSSALDSVTVSGRPLEMSVTKAEVAPEEDERKKRRRERNKIAAAKCRNKKKEKTECLQKESEKLESVNAELKAQIEELKNEKQHLIYMLNLHRPTCIVRAQNGRTPEDERNLFIQQIKEGTLQS.

Positions 76–97 (VTKAEVAPEEDERKKRRRERNK) are disordered. K78 participates in a covalent cross-link: Glycyl lysine isopeptide (Lys-Gly) (interchain with G-Cter in SUMO2). A bZIP domain is found at 86-149 (DERKKRRRER…QHLIYMLNLH (64 aa)). The interval 88–110 (RKKRRRERNKIAAAKCRNKKKEK) is basic motif. The segment at 114–142 (LQKESEKLESVNAELKAQIEELKNEKQHL) is leucine-zipper. T162 carries the phosphothreonine modification. K175 participates in a covalent cross-link: Glycyl lysine isopeptide (Lys-Gly) (interchain with G-Cter in SUMO2).

The protein belongs to the bZIP family. ATF subfamily. Binds DNA as a homodimer or a heterodimer. Interacts with KAT5; promoting KAT5 autoacetylation and KAT5 deubiquitination by USP7.

It is found in the nucleus. Functionally, this protein binds the cAMP response element (CRE) (consensus: 5'-GTGACGT[AC][AG]-3'), a sequence present in many viral and cellular promoters. Represses transcription from promoters with ATF sites. It may repress transcription by stabilizing the binding of inhibitory cofactors at the promoter. This Bos taurus (Bovine) protein is Cyclic AMP-dependent transcription factor ATF-3 (ATF3).